The chain runs to 111 residues: P antigen family member 2 (111 aa).

Residues M1–P66 form a disordered region. A compositionally biased stretch (polar residues) spans R8–V24.

Belongs to the GAGE family.

The sequence is that of P antigen family member 2 (PAGE2) from Homo sapiens (Human).